A 166-amino-acid chain; its full sequence is UPF0304 protein VC_1871 (166 aa).

Belongs to the UPF0304 family.

This is UPF0304 protein VC_1871 from Vibrio cholerae serotype O1 (strain ATCC 39315 / El Tor Inaba N16961).